The following is an 86-amino-acid chain: Elicitor peptide 5 (86 aa).

Positions 1–59 (MQQERDHKRDCCKLMPQTVKAFFKCLRFRRSSSSSSDMVKARARNEEKEEPSSIETSTR) are excised as a propeptide. Residues 31-86 (SSSSSSDMVKARARNEEKEEPSSIETSTRSLNVMRKGIRKQPVSSGKRGGVNDYDM) form a disordered region. Residues 39–51 (VKARARNEEKEEP) show a composition bias toward basic and acidic residues.

The protein belongs to the brassicaceae elicitor peptide family.

Functionally, elicitor of plant defense. The chain is Elicitor peptide 5 (PEP5) from Arabidopsis thaliana (Mouse-ear cress).